We begin with the raw amino-acid sequence, 222 residues long: Sugar fermentation stimulation protein homolog (222 aa).

This sequence belongs to the SfsA family.

The polypeptide is Sugar fermentation stimulation protein homolog (Thermotoga maritima (strain ATCC 43589 / DSM 3109 / JCM 10099 / NBRC 100826 / MSB8)).